The following is a 70-amino-acid chain: Putative membrane protein insertion efficiency factor (70 aa).

This sequence belongs to the UPF0161 family.

The protein localises to the cell membrane. In terms of biological role, could be involved in insertion of integral membrane proteins into the membrane. This Moorella thermoacetica (strain ATCC 39073 / JCM 9320) protein is Putative membrane protein insertion efficiency factor.